A 285-amino-acid polypeptide reads, in one-letter code: Transmembrane protein 53-A (285 aa).

The chain crosses the membrane as a helical span at residues 165–185 (FLALAAFAILVIILRILLYPL).

This sequence belongs to the TMEM53 family.

It is found in the nucleus outer membrane. In terms of biological role, ensures normal bone formation, through the negative regulation of bone morphogenetic protein (BMP) signaling in osteoblast lineage cells by blocking cytoplasm-nucleus translocation of phosphorylated SMAD proteins. This chain is Transmembrane protein 53-A (tmem53-a), found in Xenopus laevis (African clawed frog).